A 339-amino-acid polypeptide reads, in one-letter code: D-alanine--D-alanine ligase (339 aa).

The 208-residue stretch at 126-333 (KQVLASVGMP…YSELVTRLVE (208 aa)) folds into the ATP-grasp domain. 158–213 (AGELGYPLFVKPANLGSSVGISKVSGPGELERALDLAFSLGRRVILEAMTAHKPRE) lines the ATP pocket. Mg(2+)-binding residues include D286, E300, and N302.

It belongs to the D-alanine--D-alanine ligase family. Mg(2+) is required as a cofactor. Requires Mn(2+) as cofactor.

It is found in the cytoplasm. It catalyses the reaction 2 D-alanine + ATP = D-alanyl-D-alanine + ADP + phosphate + H(+). It participates in cell wall biogenesis; peptidoglycan biosynthesis. Cell wall formation. This chain is D-alanine--D-alanine ligase, found in Deinococcus geothermalis (strain DSM 11300 / CIP 105573 / AG-3a).